We begin with the raw amino-acid sequence, 339 residues long: D-alanine--D-alanine ligase (339 aa).

The ATP-grasp domain maps to 115 to 327 (KHIFRSLGID…FNELVKIIIE (213 aa)). 142-211 (KIDYPYVLKP…EEYIPGIELH (70 aa)) provides a ligand contact to ATP. 3 residues coordinate Mg(2+): D279, E293, and N295.

Belongs to the D-alanine--D-alanine ligase family. It depends on Mg(2+) as a cofactor. Requires Mn(2+) as cofactor.

It is found in the cytoplasm. The enzyme catalyses 2 D-alanine + ATP = D-alanyl-D-alanine + ADP + phosphate + H(+). It functions in the pathway cell wall biogenesis; peptidoglycan biosynthesis. Its function is as follows. Cell wall formation. This chain is D-alanine--D-alanine ligase, found in Wolbachia sp. subsp. Brugia malayi (strain TRS).